The primary structure comprises 76 residues: Putative membrane protein insertion efficiency factor (76 aa).

This sequence belongs to the UPF0161 family.

The protein resides in the cell inner membrane. In terms of biological role, could be involved in insertion of integral membrane proteins into the membrane. In Paraburkholderia phymatum (strain DSM 17167 / CIP 108236 / LMG 21445 / STM815) (Burkholderia phymatum), this protein is Putative membrane protein insertion efficiency factor.